The chain runs to 452 residues: Scaffold protein ILK (452 aa).

M1 is subject to N-acetylmethionine. ANK repeat units follow at residues 2–30 (DDIF…LNQG), 31–63 (DDHG…INVM), 64–96 (NRGD…INAV), 97–129 (NEHG…VSIC), and 130–174 (NKYG…GTTR). The tract at residues 33 to 139 (HGFSPLHWAC…NKYGEMPVDK (107 aa)) is interaction with LIMS1. T173 carries the post-translational modification Phosphothreonine. A PH-like; mediates interaction with TGFB1I1 region spans residues 180–212 (GTLNKHSGIDFKQLNFLAKLNENHSGELWKGRW). A Phosphoserine modification is found at S186. The 254-residue stretch at 193–446 (LNFLAKLNEN…PKFDMIVPIL (254 aa)) folds into the Protein kinase domain. ATP contacts are provided by N200, N202, H203, and S204. S246 bears the Phosphoserine mark. Positions 270, 272, and 279 each coordinate ATP. A Mg(2+)-binding site is contributed by D339. An ATP-binding site is contributed by K341. The short motif at 363 to 371 (KKPEDTNRR) is the Nuclear localization signal element. K426 carries the post-translational modification N6-acetyllysine.

The protein belongs to the protein kinase superfamily. TKL Ser/Thr protein kinase family. In terms of assembly, component of the heterotrimeric IPP (ILK-PINCH-PARVIN) complex composed of ILK, LIMS1/PINCH and PARVA; the complex binds to F-actin via the C-terminal tail of LIMS1 and the N-terminal region of PARVA, promoting F-actin filament bundling. Formation of the IPP complex is dependent on protein kinase C and precedes integrin-mediated cell adhesion and spreading. ILK also interacts with LIMS2/PINCH2 and with PARVB and PARVG which may substitute for LIMS1 and PARVA in the IPP complex; PARVA and PARVB compete for the same binding site. Interaction with PARVG promotes the establishment of cell polarity required for leukocyte migration. Interacts with the cytoplasmic domain of integrin ITGB1 and may also interact with integrins ITGB2, ITGB3 and/or ITGB5. Interacts probably also with TGFB1I1. Interacts (via ANK repeats) with EPHA1 (via SAM domain); stimulated by EFNA1 but independent of the kinase activity of EPHA1. Interacts with FERMT2. Interacts with LIMD2; leading to activate the protein kinase activity. Interacts with PXN/PAXILLIN (via LD motif 4). Interacts with CCDC25 (via cytoplasmic region); initiating the ILK-PARVB cascade to induce cytoskeleton rearrangement and directional migration of cells. Interacts with IQGAP1; the interaction is required for localization of IQGAP1 to the cell cortex. In terms of processing, phosphorylation by PAK1 modulates ILK subcellular location by promoting its nuclear export. As to expression, highly expressed in lung, heart, kidney, liver, brain, spleen and skeletal muscle. Weakly expressed in testis.

The protein localises to the cell junction. Its subcellular location is the focal adhesion. It is found in the cell membrane. It localises to the cytoplasm. The protein resides in the myofibril. The protein localises to the sarcomere. Its subcellular location is the cell projection. It is found in the lamellipodium. It localises to the nucleus. The protein resides in the cytoskeleton. The protein localises to the microtubule organizing center. Its subcellular location is the centrosome. It is found in the cell cortex. In terms of biological role, scaffold protein which mediates protein-protein interactions during a range of cellular events including focal adhesion assembly, cell adhesion and cell migration. Regulates integrin-mediated signal transduction by contributing to inside-out integrin activation. Recruits PARVA and LIMS1/PITCH to form the heterotrimeric IPP (ILK-PINCH-PARVIN) complex which binds to F-actin via the C-terminal tail of LIMS1 and the N-terminal region of PARVA, promoting F-actin filament bundling, a process required to generate force for actin cytoskeleton reorganization and subsequent dynamic cell adhesion events such as cell spreading and migration. Binding to PARVA promotes effective assembly of ILK into focal adhesions while PARVA-bound ILK can simultaneously engage integrin-beta cytoplasmic tails to mediate cell adhesion. Plays a role with PARVG in promoting the cell adhesion and spreading of leukocytes. Acts as an upstream effector of both AKT1/PKB and GSK3. Mediates trafficking of caveolae to the cell surface in an ITGB1-dependent manner by promoting the recruitment of IQGAP1 to the cell cortex which cooperates with its effector DIAPH1 to locally stabilize microtubules and allow stable insertion of caveolae into the plasma membrane. Required for the maintenance of mitotic spindle integrity by promoting phosphorylation of TACC3 by AURKA. Associates with chromatin and may act as a negative regulator of transcription when located in the nucleus. This Mus musculus (Mouse) protein is Scaffold protein ILK.